The sequence spans 306 residues: Solute carrier family 25 member 48 (306 aa).

3 Solcar repeats span residues 3 to 86 (SFQL…TQRF), 101 to 200 (RSLS…LSEW), and 209 to 296 (PSPY…SLKA). The next 6 membrane-spanning stretches (helical) occupy residues 9–29 (FVAG…LDTV), 61–81 (GMSF…GVFS), 107–127 (LLAS…VELI), 184–204 (IPGY…ITPE), 212–232 (YAAW…ATPM), and 272–290 (ITVN…FLGY).

Belongs to the mitochondrial carrier (TC 2.A.29) family.

The protein resides in the mitochondrion inner membrane. The protein is Solute carrier family 25 member 48 (Slc25a48) of Mus musculus (Mouse).